Consider the following 253-residue polypeptide: 3-deoxy-manno-octulosonate cytidylyltransferase (253 aa).

It belongs to the KdsB family.

It localises to the cytoplasm. The catalysed reaction is 3-deoxy-alpha-D-manno-oct-2-ulosonate + CTP = CMP-3-deoxy-beta-D-manno-octulosonate + diphosphate. It participates in nucleotide-sugar biosynthesis; CMP-3-deoxy-D-manno-octulosonate biosynthesis; CMP-3-deoxy-D-manno-octulosonate from 3-deoxy-D-manno-octulosonate and CTP: step 1/1. The protein operates within bacterial outer membrane biogenesis; lipopolysaccharide biosynthesis. In terms of biological role, activates KDO (a required 8-carbon sugar) for incorporation into bacterial lipopolysaccharide in Gram-negative bacteria. This chain is 3-deoxy-manno-octulosonate cytidylyltransferase, found in Acinetobacter baumannii (strain AYE).